The following is a 60-amino-acid chain: Bowman-Birk type proteinase inhibitor C1 (60 aa).

4 disulfides stabilise this stretch: C5–C21, C11–C19, C28–C35, and C32–C49.

It belongs to the Bowman-Birk serine protease inhibitor family. As to expression, expressed in bulb (at protein level).

Its function is as follows. Serine protease inhibitor. Strongly inhibits trypsin (Ki = 0.22 nM) and very weakly inhibits chymotrypsin (Ki = 1200 nM). Does not inhibit bacterial subtilisin. The sequence is that of Bowman-Birk type proteinase inhibitor C1 from Hyacinthus orientalis (Common hyacinth).